Reading from the N-terminus, the 302-residue chain is Mas-related G-protein coupled receptor member A3 (302 aa).

The Extracellular segment spans residues 1–17; sequence MNETIPGSIDIETLIPD. Asparagine 2 carries an N-linked (GlcNAc...) asparagine glycan. The helical transmembrane segment at 18–38 threads the bilayer; sequence LMIIIFGLVGLTGNAIVFWLL. The Cytoplasmic portion of the chain corresponds to 39-46; sequence GFRMHRTA. The helical transmembrane segment at 47 to 67 threads the bilayer; that stretch reads FLVYILNLALADFLFLLCHII. Asparagine 68 is a glycosylation site (N-linked (GlcNAc...) asparagine). Topologically, residues 68–81 are extracellular; sequence NSTVDLLKFTLPKG. The chain crosses the membrane as a helical span at residues 82 to 102; sequence IFAFCFHTIKRVLYITGLSML. Topologically, residues 103–129 are cytoplasmic; it reads SAISTERCLSVLCPIWYHCRRPEHTST. Residues 130-150 traverse the membrane as a helical segment; that stretch reads VMCAVIWVLSLLICILDGYFC. Topologically, residues 151 to 167 are extracellular; that stretch reads GYLDNHYFNYSVCQAWD. N-linked (GlcNAc...) asparagine glycosylation occurs at asparagine 159. A helical transmembrane segment spans residues 168–188; it reads IFIGAYLMFLFVVLCLSTLAL. The Cytoplasmic segment spans residues 189 to 211; the sequence is LARLFCGARNMKFTRLFVTIMLT. The helical transmembrane segment at 212 to 232 threads the bilayer; that stretch reads VLVFLLCGLPWGITWFLLFWI. The Extracellular portion of the chain corresponds to 233 to 242; sequence APGVFVLDYS. Residues 243 to 263 form a helical membrane-spanning segment; that stretch reads PLLVLTAINSCANPIIYFFVG. Residues 264–302 lie on the Cytoplasmic side of the membrane; sequence SFRQRLNKQTLKMVLQKALQDTPETPENMVEMSRNKAEP.

This sequence belongs to the G-protein coupled receptor 1 family. Mas subfamily. As to expression, expressed exclusively in dorsal root ganglia and nodose ganglia. Expressed in a subset of sensory neurons that includes nociceptors. Expressed in the subclass of non-peptidergic sensory neurons that are IB4(+) and VR1(-).

It localises to the cell membrane. Its function is as follows. Orphan receptor. May be a receptor for RFamide-family neuropeptides such as NPFF and NPAF, which are analgesic in vivo. May regulate nociceptor function and/or development, including the sensation or modulation of pain. Activated by the antimalarial drug chloroquine. Mediates chloroquine-induced itch, in a histamine-independent manner. This is Mas-related G-protein coupled receptor member A3 (Mrgpra3) from Mus musculus (Mouse).